We begin with the raw amino-acid sequence, 339 residues long: DNA-directed RNA polymerase subunit alpha (339 aa).

Residues 1-235 form an alpha N-terminal domain (alpha-NTD) region; that stretch reads MVIQKNWQEL…DQLQVFVNFE (235 aa). Residues 251 to 339 form an alpha C-terminal domain (alpha-CTD) region; that stretch reads FNPALLKKVD…DLAKRFEEHY (89 aa).

It belongs to the RNA polymerase alpha chain family. Homodimer. The RNAP catalytic core consists of 2 alpha, 1 beta, 1 beta' and 1 omega subunit. When a sigma factor is associated with the core the holoenzyme is formed, which can initiate transcription.

The enzyme catalyses RNA(n) + a ribonucleoside 5'-triphosphate = RNA(n+1) + diphosphate. Its function is as follows. DNA-dependent RNA polymerase catalyzes the transcription of DNA into RNA using the four ribonucleoside triphosphates as substrates. The chain is DNA-directed RNA polymerase subunit alpha from Methylorubrum extorquens (strain CM4 / NCIMB 13688) (Methylobacterium extorquens).